A 496-amino-acid chain; its full sequence is MLO-like protein 15 (496 aa).

Residues 1-9 (MAGGGTTLE) lie on the Extracellular side of the membrane. Residues 10-30 (YTPTWVVALVCSVIVSISFAV) traverse the membrane as a helical segment. The Cytoplasmic segment spans residues 31 to 59 (ERLIHRAGKHFKNNDQKQLFGALQKIKEE). Residues 60-80 (LMLVGFISLLLSVGQSKIAKI) traverse the membrane as a helical segment. Topologically, residues 81–147 (CISKELSEKF…MSLSALHELH (67 aa)) are extracellular. Residues 148–168 (IFIFVLAVAHIIFCLLTIVFG) form a helical membrane-spanning segment. The Cytoplasmic segment spans residues 169 to 269 (TMKIKQWKKW…KYLMRALNSD (101 aa)). The helical transmembrane segment at 270-290 (FKKVVGISWYLWVFVVLFLLL) threads the bilayer. Residue Asn-291 is a topological domain, extracellular. The helical transmembrane segment at 292 to 312 (IVAWHVYFWLAFIPLILLLAV) threads the bilayer. Residues 313–355 (GTKLEHIITDLAHEVAEKHIAVEGDLVVRPSDDLFWFQSPRLV) lie on the Cytoplasmic side of the membrane. The chain crosses the membrane as a helical span at residues 356-376 (LFLIHFILFQNSFEIAYFFFI). Residues 377-397 (LFQFGWDSCIMDHVKFVIPRL) lie on the Extracellular side of the membrane. Residues 398–418 (VIGVIIQLLCSYSTLPLYALV) form a helical membrane-spanning segment. The Cytoplasmic segment spans residues 419–496 (TQMGSSFKGA…KEKSEIAHHD (78 aa)). Positions 432 to 453 (EQTQEHLVGWAKMAKRGVKKGA) are calmodulin-binding. The disordered stretch occupies residues 454–496 (TQVGTSHDATSPRPSIQLNSLLGKGSSQQNQNPKEKSEIAHHD). Over residues 455 to 485 (QVGTSHDATSPRPSIQLNSLLGKGSSQQNQN) the composition is skewed to polar residues. Positions 486-496 (PKEKSEIAHHD) are enriched in basic and acidic residues.

The protein belongs to the MLO family.

The protein localises to the membrane. Functionally, may be involved in modulation of pathogen defense and leaf cell death. Activity seems to be regulated by Ca(2+)-dependent calmodulin binding and seems not to require heterotrimeric G proteins. The protein is MLO-like protein 15 (MLO15) of Arabidopsis thaliana (Mouse-ear cress).